The following is a 456-amino-acid chain: RUN domain-containing protein 3B (456 aa).

Positions 1–24 are disordered; it reads MASRSLGGLSGIRGGGGGGGKKSL. The segment covering 8–21 has biased composition (gly residues); the sequence is GLSGIRGGGGGGGK. R13 bears the Omega-N-methylarginine mark. Residues 57-189 enclose the RUN domain; that stretch reads DDSSPEFNNF…IDFSFCLKGE (133 aa). Residues S215 and S216 each carry the phosphoserine modification. A disordered region spans residues 216–237; it reads SDEEELRTLGSSGSESSTPENV. A compositionally biased stretch (polar residues) spans 224–235; that stretch reads LGSSGSESSTPE. A coiled-coil region spans residues 300 to 325; the sequence is AHKLEKEQLEYIIVELQDQLTVLKNN. Polar residues predominate over residues 382–405; the sequence is SLSQTSLDPGQSQEGDGKQDTLNV. The interval 382-411 is disordered; that stretch reads SLSQTSLDPGQSQEGDGKQDTLNVMSEGKE.

It belongs to the RUNDC3 family. Interacts with RAP2A.

The polypeptide is RUN domain-containing protein 3B (RUNDC3B) (Pongo abelii (Sumatran orangutan)).